A 419-amino-acid polypeptide reads, in one-letter code: Tyrosine--tRNA ligase (419 aa).

Y42 contacts L-tyrosine. The short motif at 47–56 is the 'HIGH' region element; that stretch reads ATAPSLHVGS. L-tyrosine-binding residues include Y179 and Q183. Residues 239–243 carry the 'KMSKS' region motif; the sequence is KMGKT. Position 242 (K242) interacts with ATP. The region spanning 353–418 is the S4 RNA-binding domain; sequence IVLANLFADA…GKKKIVLVKP (66 aa).

The protein belongs to the class-I aminoacyl-tRNA synthetase family. TyrS type 1 subfamily. Homodimer.

It localises to the cytoplasm. The enzyme catalyses tRNA(Tyr) + L-tyrosine + ATP = L-tyrosyl-tRNA(Tyr) + AMP + diphosphate + H(+). Functionally, catalyzes the attachment of tyrosine to tRNA(Tyr) in a two-step reaction: tyrosine is first activated by ATP to form Tyr-AMP and then transferred to the acceptor end of tRNA(Tyr). The polypeptide is Tyrosine--tRNA ligase (Caulobacter sp. (strain K31)).